The primary structure comprises 361 residues: Phosphoserine aminotransferase (361 aa).

An L-glutamate-binding site is contributed by arginine 43. Pyridoxal 5'-phosphate is bound by residues 77–78, tryptophan 103, threonine 152, aspartate 172, and glutamine 195; that span reads AS. Lysine 196 is subject to N6-(pyridoxal phosphate)lysine. 237–238 serves as a coordination point for pyridoxal 5'-phosphate; the sequence is NT.

This sequence belongs to the class-V pyridoxal-phosphate-dependent aminotransferase family. SerC subfamily. In terms of assembly, homodimer. Pyridoxal 5'-phosphate is required as a cofactor.

It localises to the cytoplasm. The enzyme catalyses O-phospho-L-serine + 2-oxoglutarate = 3-phosphooxypyruvate + L-glutamate. The catalysed reaction is 4-(phosphooxy)-L-threonine + 2-oxoglutarate = (R)-3-hydroxy-2-oxo-4-phosphooxybutanoate + L-glutamate. It functions in the pathway amino-acid biosynthesis; L-serine biosynthesis; L-serine from 3-phospho-D-glycerate: step 2/3. It participates in cofactor biosynthesis; pyridoxine 5'-phosphate biosynthesis; pyridoxine 5'-phosphate from D-erythrose 4-phosphate: step 3/5. In terms of biological role, catalyzes the reversible conversion of 3-phosphohydroxypyruvate to phosphoserine and of 3-hydroxy-2-oxo-4-phosphonooxybutanoate to phosphohydroxythreonine. In Desulfatibacillum aliphaticivorans, this protein is Phosphoserine aminotransferase.